Reading from the N-terminus, the 119-residue chain is Microtubule nucleation factor SSNA1 (119 aa).

At Thr-2 the chain carries N-acetylthreonine. An important for localization to the centrosome region spans residues 2–32; sequence TQQGAALQNYNNELVKCIEELCQKREELCRQ. Residues 13-70 adopt a coiled-coil conformation; that stretch reads NELVKCIEELCQKREELCRQIQEEEDEKQRLQNEVRQLTEKLARVNENLARKIASRNE.

This sequence belongs to the SSNA1 family. As to quaternary structure, self-associates to form fibrils. Also forms dimers as well as monomers. Interacts with SPAST. In terms of tissue distribution, widely expressed.

It localises to the nucleus. The protein localises to the cytoplasm. It is found in the cytoskeleton. The protein resides in the microtubule organizing center. Its subcellular location is the centrosome. It localises to the centriole. The protein localises to the midbody. It is found in the flagellum basal body. The protein resides in the flagellum axoneme. Its subcellular location is the cell projection. It localises to the axon. In terms of biological role, microtubule-binding protein which stabilizes dynamic microtubules by slowing growth and shrinkage at both plus and minus ends and serves as a sensor of microtubule damage, protecting microtubules from the microtubule-severing enzyme SPAST. Induces microtubule branching which is mediated by the formation of long SSNA1 fibrils which guide microtubule protofilaments to split apart from the mother microtubule and form daughter microtubules. Plays a role in axon outgrowth and branching. Required for cell division. This Homo sapiens (Human) protein is Microtubule nucleation factor SSNA1.